A 594-amino-acid polypeptide reads, in one-letter code: Putative phospholipase B-like 2 (594 aa).

The N-terminal stretch at 1-46 (MAAPVDGSSGGWAARALRRALALTSLTTLALLASLTGLLLSGPAGA) is a signal peptide. N-linked (GlcNAc...) asparagine glycans are attached at residues N93 and N115. C147 and C157 are disulfide-bonded. N-linked (GlcNAc...) asparagine glycosylation is found at N236 and N441. A disulfide bond links C497 and C500. Residue N520 is glycosylated (N-linked (GlcNAc...) asparagine).

Belongs to the phospholipase B-like family. Interacts with IGF2R. In terms of processing, the p76 protein is synthesized as a 76 kDa precursor which is then processed into a N-terminal 28 kDa form and a C-terminal 40 kDa form. The C-terminal peptide is further processed into a 15 kDa form. Post-translationally, glycosylated; contains mannose 6-phosphate sugars. Present at highest levels in spleen, lung and brain (at protein level).

It localises to the lysosome lumen. In terms of biological role, putative phospholipase. In Mus musculus (Mouse), this protein is Putative phospholipase B-like 2 (Plbd2).